Consider the following 720-residue polypeptide: Polyribonucleotide nucleotidyltransferase (720 aa).

Residues Asp-486 and Asp-492 each contribute to the Mg(2+) site. Residues Pro-553–Ile-612 enclose the KH domain. One can recognise an S1 motif domain in the interval Gly-622–Arg-690. The disordered stretch occupies residues Glu-698–Glu-720.

It belongs to the polyribonucleotide nucleotidyltransferase family. The cofactor is Mg(2+).

It is found in the cytoplasm. It carries out the reaction RNA(n+1) + phosphate = RNA(n) + a ribonucleoside 5'-diphosphate. Functionally, involved in mRNA degradation. Catalyzes the phosphorolysis of single-stranded polyribonucleotides processively in the 3'- to 5'-direction. This chain is Polyribonucleotide nucleotidyltransferase, found in Granulibacter bethesdensis (strain ATCC BAA-1260 / CGDNIH1).